Reading from the N-terminus, the 82-residue chain is MPKVITISDDVYDKLSKLKKGRSFSETINELIEFYNKNRKGNKDVLLQMFGILNEEEATEMASETLNIRKSFRFRAVENGDT.

The protein belongs to the UPF0330 family.

Its function is as follows. Possibly the antitoxin component of a type II toxin-antitoxin (TA) system. The protein is Putative antitoxin Saci_0468 of Sulfolobus acidocaldarius (strain ATCC 33909 / DSM 639 / JCM 8929 / NBRC 15157 / NCIMB 11770).